The primary structure comprises 445 residues: MKPVIALVGRPNVGKSTLFNRLTRSRDALVADLPGLTRDRHYGEGRVGERPYLVVDTGGFEPVAKDGILHEMARQTRQAVEEADVVVFIVDGRNGLAPQDKSIADYLRKTGRPIFLVVNKAEGMKYTAVATDFYELGLGDPRAISAAHGDGVTDMINEALEVAYAGQPEEADDNDPSRGIKIAIVGRPNVGKSTLVNALIGEDRVIAFDMPGTTRDSIYVDFERNGKKYTLIDTAGLRRRGKVFEAIEKFSVVKTLQSISDANVVILLLDAQQDISDQDAHIAGFVVEQGRALVIGVNKWDGLDDHARDRAKADLTRKLKFLDFAKSHYISAAKKTGIGALMRSVDDAYAAAMAKLPTPKLTRALIEAVEFQQPRRRGPVRPKLRYAHQGGQNPPLIVIHGNALDAVTETYKRYLENRFRETFSLTGTPLRIEFRSSNNPYADKG.

2 EngA-type G domains span residues 3-167 (PVIA…YAGQ) and 180-353 (IKIA…AAAM). GTP contacts are provided by residues 9 to 16 (GRPNVGKS), 56 to 60 (DTGGF), 119 to 122 (NKAE), 186 to 193 (GRPNVGKS), 233 to 237 (DTAGL), and 298 to 301 (NKWD). One can recognise a KH-like domain in the interval 354-438 (AKLPTPKLTR…PLRIEFRSSN (85 aa)).

It belongs to the TRAFAC class TrmE-Era-EngA-EngB-Septin-like GTPase superfamily. EngA (Der) GTPase family. As to quaternary structure, associates with the 50S ribosomal subunit.

Its function is as follows. GTPase that plays an essential role in the late steps of ribosome biogenesis. The sequence is that of GTPase Der from Burkholderia vietnamiensis (strain G4 / LMG 22486) (Burkholderia cepacia (strain R1808)).